We begin with the raw amino-acid sequence, 615 residues long: MSAAPHLAPGADPAMIRNFCIIAHIDHGKSTLADRMLGVTGVVEARNMRAQYLDRMDIERERGITIKAQNVRLPWRAQDGQDYILHLIDTPGHVDFSYEVSRSLAACEGAVLLVDAAQGIEAQTLANLYLAIENDLTIVPVLNKIDLPAAQPEKYAEEIAAIIGCDPGDVLRVSGKTGQGVPELLNEIVRQVPAPVGNPAGPARAMIFDSVYDIYRGVITYVRVIDGTLTTRDRCLMMSTGASHETLEVGVISPDPHPTGSLSVGEVGYVIPGVKDVRQARVGDTVTTTRNPATEMLGGYRDPLPMVYSGLYPIDGSEYPALREALDKLQLNDAALTYEPETSAALGFGFRCGFLGLLHLEIVRERLEREFNLTLISTAPNVVYRVVMEDLSEVTVTNPSDWPGGKIAEVYEPVVDAMLLLPTDFVGAVMELCQGRRGVLKGMDYLSTDRVELKYTLPLGEIIFDFFDALKSRTRGYASLDYEPAGEQLADLVKVDILLQGETVDAFSAIVHKEKAYSYGVAMTTKLRELIPRQQFEVPIQAAIGSRIIARENIRAIRKDVLAKCYGGDITRKRKLLEKQKEGKKRMKTIGRVEVPQEAFIAALSTDTGKSATSK.

The tr-type G domain maps to 14 to 196; it reads AMIRNFCIIA…EIVRQVPAPV (183 aa). GTP-binding positions include 26-31 and 143-146; these read DHGKST and NKID.

This sequence belongs to the TRAFAC class translation factor GTPase superfamily. Classic translation factor GTPase family. LepA subfamily.

The protein localises to the cell membrane. It carries out the reaction GTP + H2O = GDP + phosphate + H(+). Its function is as follows. Required for accurate and efficient protein synthesis under certain stress conditions. May act as a fidelity factor of the translation reaction, by catalyzing a one-codon backward translocation of tRNAs on improperly translocated ribosomes. Back-translocation proceeds from a post-translocation (POST) complex to a pre-translocation (PRE) complex, thus giving elongation factor G a second chance to translocate the tRNAs correctly. Binds to ribosomes in a GTP-dependent manner. This is Elongation factor 4 from Frankia alni (strain DSM 45986 / CECT 9034 / ACN14a).